The chain runs to 226 residues: PKHD-type hydroxylase PputW619_4316 (226 aa).

The region spanning 78-178 is the Fe2OG dioxygenase domain; the sequence is KVFPPLINCY…RYAAFFWTQS (101 aa). Fe cation is bound by residues histidine 96, aspartate 98, and histidine 159. Arginine 169 contacts 2-oxoglutarate.

Fe(2+) is required as a cofactor. Requires L-ascorbate as cofactor.

This Pseudomonas putida (strain W619) protein is PKHD-type hydroxylase PputW619_4316.